A 671-amino-acid chain; its full sequence is Oviduct-specific glycoprotein (671 aa).

A signal peptide spans 1–21 (MGRLLLWVGLVLLMKPNDGTA). In terms of domain architecture, GH18 spans 22–385 (YKLVCYFTNW…HILNELLVRA (364 aa)). The cysteines at positions 26 and 51 are disulfide-linked. Chitin-binding positions include 71–72 (LQ), 98–101 (GGWN), Y142, 211–214 (LSYD), and W355. N-linked (GlcNAc...) asparagine glycosylation is present at N402. 8 repeat units span residues 490-504 (TGMTVTVQTQTAGRE), 505-519 (TMTTVGNQSVTPGGE), 520-534 (TMTTVGNQSVTPGGE), 535-549 (TVTTVGNQSVTPGGE), 550-564 (TMTTVGNQSVTPGGE), 565-579 (TVTIVGNKSVTPVGE), 580-594 (TVTIVGNKSVTPGGQ), and 595-609 (TTATVGSQSVTPPGM). The tract at residues 490-609 (TGMTVTVQTQ…GSQSVTPPGM (120 aa)) is 8 X 15 AA tandem repeats. N-linked (GlcNAc...) asparagine glycosylation is found at N511, N526, N541, N556, N571, and N586.

It belongs to the glycosyl hydrolase 18 family. In terms of processing, highly O-glycosylated and also N-glycosylated. Oviduct.

The protein resides in the cytoplasmic vesicle. It localises to the secretory vesicle. In terms of biological role, binds to oocyte zona pellucida in vivo. May play a role in the fertilization process and/or early embryonic development. Might act as a protective secretion influencing the first steps of the reproductive process necessary for the normal triggering of fertilization and early embryonic development. The polypeptide is Oviduct-specific glycoprotein (OVGP1) (Mesocricetus auratus (Golden hamster)).